A 351-amino-acid polypeptide reads, in one-letter code: Anthranilate phosphoribosyltransferase (351 aa).

5-phospho-alpha-D-ribose 1-diphosphate-binding positions include glycine 90, 93–94 (GD), threonine 98, 100–103 (NIST), 118–126 (KHGNRSASG), and serine 130. Glycine 90 is an anthranilate binding site. Serine 102 serves as a coordination point for Mg(2+). Residue asparagine 121 participates in anthranilate binding. Arginine 176 lines the anthranilate pocket. Mg(2+) contacts are provided by aspartate 235 and glutamate 236.

Belongs to the anthranilate phosphoribosyltransferase family. Homodimer. Requires Mg(2+) as cofactor.

The catalysed reaction is N-(5-phospho-beta-D-ribosyl)anthranilate + diphosphate = 5-phospho-alpha-D-ribose 1-diphosphate + anthranilate. It participates in amino-acid biosynthesis; L-tryptophan biosynthesis; L-tryptophan from chorismate: step 2/5. Functionally, catalyzes the transfer of the phosphoribosyl group of 5-phosphorylribose-1-pyrophosphate (PRPP) to anthranilate to yield N-(5'-phosphoribosyl)-anthranilate (PRA). In Prochlorococcus marinus (strain MIT 9313), this protein is Anthranilate phosphoribosyltransferase.